The following is a 349-amino-acid chain: 3-dehydroquinate synthase (349 aa).

NAD(+) is bound by residues D63–K68, G97–D101, T121–T122, K134, K143, and F161–T164. E176, H235, and H252 together coordinate Zn(2+).

Belongs to the sugar phosphate cyclases superfamily. Dehydroquinate synthase family. It depends on Co(2+) as a cofactor. Requires Zn(2+) as cofactor. NAD(+) serves as cofactor.

The protein resides in the cytoplasm. The enzyme catalyses 7-phospho-2-dehydro-3-deoxy-D-arabino-heptonate = 3-dehydroquinate + phosphate. It participates in metabolic intermediate biosynthesis; chorismate biosynthesis; chorismate from D-erythrose 4-phosphate and phosphoenolpyruvate: step 2/7. In terms of biological role, catalyzes the conversion of 3-deoxy-D-arabino-heptulosonate 7-phosphate (DAHP) to dehydroquinate (DHQ). The protein is 3-dehydroquinate synthase of Nitratiruptor sp. (strain SB155-2).